The following is a 214-amino-acid chain: tRNA (guanine-N(7)-)-methyltransferase (214 aa).

S-adenosyl-L-methionine-binding residues include Glu-43, Glu-68, Asp-95, and Asp-117. Asp-117 is a catalytic residue. Substrate contacts are provided by residues Lys-121, Asp-153, and 191–194; that span reads TEYE.

The protein belongs to the class I-like SAM-binding methyltransferase superfamily. TrmB family.

The catalysed reaction is guanosine(46) in tRNA + S-adenosyl-L-methionine = N(7)-methylguanosine(46) in tRNA + S-adenosyl-L-homocysteine. Its pathway is tRNA modification; N(7)-methylguanine-tRNA biosynthesis. In terms of biological role, catalyzes the formation of N(7)-methylguanine at position 46 (m7G46) in tRNA. This Brevibacillus brevis (strain 47 / JCM 6285 / NBRC 100599) protein is tRNA (guanine-N(7)-)-methyltransferase.